Here is a 122-residue protein sequence, read N- to C-terminus: Large ribosomal subunit protein uL14 (122 aa).

The protein belongs to the universal ribosomal protein uL14 family. In terms of assembly, part of the 50S ribosomal subunit. Forms a cluster with proteins L3 and L19. In the 70S ribosome, L14 and L19 interact and together make contacts with the 16S rRNA in bridges B5 and B8.

Its function is as follows. Binds to 23S rRNA. Forms part of two intersubunit bridges in the 70S ribosome. This chain is Large ribosomal subunit protein uL14, found in Streptococcus suis (strain 05ZYH33).